The chain runs to 168 residues: ATP synthase subunit b (168 aa).

A helical transmembrane segment spans residues 11–31; that stretch reads NTVLGNIIVVSGAFIILLVLL.

The protein belongs to the ATPase B chain family. As to quaternary structure, F-type ATPases have 2 components, F(1) - the catalytic core - and F(0) - the membrane proton channel. F(1) has five subunits: alpha(3), beta(3), gamma(1), delta(1), epsilon(1). F(0) has three main subunits: a(1), b(2) and c(10-14). The alpha and beta chains form an alternating ring which encloses part of the gamma chain. F(1) is attached to F(0) by a central stalk formed by the gamma and epsilon chains, while a peripheral stalk is formed by the delta and b chains.

It localises to the cell membrane. In terms of biological role, f(1)F(0) ATP synthase produces ATP from ADP in the presence of a proton or sodium gradient. F-type ATPases consist of two structural domains, F(1) containing the extramembraneous catalytic core and F(0) containing the membrane proton channel, linked together by a central stalk and a peripheral stalk. During catalysis, ATP synthesis in the catalytic domain of F(1) is coupled via a rotary mechanism of the central stalk subunits to proton translocation. Component of the F(0) channel, it forms part of the peripheral stalk, linking F(1) to F(0). This is ATP synthase subunit b from Lactococcus lactis subsp. lactis (strain IL1403) (Streptococcus lactis).